The following is a 129-amino-acid chain: Small ribosomal subunit protein uS11 (129 aa).

The protein belongs to the universal ribosomal protein uS11 family. Part of the 30S ribosomal subunit. Interacts with proteins S7 and S18. Binds to IF-3.

Its function is as follows. Located on the platform of the 30S subunit, it bridges several disparate RNA helices of the 16S rRNA. Forms part of the Shine-Dalgarno cleft in the 70S ribosome. In Bacillus cytotoxicus (strain DSM 22905 / CIP 110041 / 391-98 / NVH 391-98), this protein is Small ribosomal subunit protein uS11.